The chain runs to 249 residues: Triosephosphate isomerase (249 aa).

9-11 (NWK) contributes to the substrate binding site. The active-site Electrophile is His-94. The Proton acceptor role is filled by Glu-166. Substrate-binding positions include Gly-172, Ser-211, and 232–233 (GG).

Belongs to the triosephosphate isomerase family. Homodimer.

Its subcellular location is the cytoplasm. It carries out the reaction D-glyceraldehyde 3-phosphate = dihydroxyacetone phosphate. The protein operates within carbohydrate biosynthesis; gluconeogenesis. Its pathway is carbohydrate degradation; glycolysis; D-glyceraldehyde 3-phosphate from glycerone phosphate: step 1/1. Involved in the gluconeogenesis. Catalyzes stereospecifically the conversion of dihydroxyacetone phosphate (DHAP) to D-glyceraldehyde-3-phosphate (G3P). The chain is Triosephosphate isomerase from Dechloromonas aromatica (strain RCB).